Reading from the N-terminus, the 448-residue chain is Eukaryotic translation initiation factor 3 subunit E (448 aa).

The PCI domain maps to 254 to 423; that stretch reads TDLFFSPAYI…GTVIMNHPPQ (170 aa).

This sequence belongs to the eIF-3 subunit E family. In terms of assembly, component of the eukaryotic translation initiation factor 3 (eIF-3) complex.

It is found in the cytoplasm. In terms of biological role, component of the eukaryotic translation initiation factor 3 (eIF-3) complex, which is involved in protein synthesis of a specialized repertoire of mRNAs and, together with other initiation factors, stimulates binding of mRNA and methionyl-tRNAi to the 40S ribosome. The eIF-3 complex specifically targets and initiates translation of a subset of mRNAs involved in cell proliferation. This is Eukaryotic translation initiation factor 3 subunit E (int6) from Emericella nidulans (strain FGSC A4 / ATCC 38163 / CBS 112.46 / NRRL 194 / M139) (Aspergillus nidulans).